A 386-amino-acid polypeptide reads, in one-letter code: Eukaryotic translation initiation factor 3 subunit M (386 aa).

One can recognise a PCI domain in the interval 181–343 (NSELASKVMI…RKVHISSTMH (163 aa)).

It belongs to the eIF-3 subunit M family. In terms of assembly, component of the eukaryotic translation initiation factor 3 (eIF-3) complex.

Its subcellular location is the cytoplasm. Component of the eukaryotic translation initiation factor 3 (eIF-3) complex, which is involved in protein synthesis of a specialized repertoire of mRNAs and, together with other initiation factors, stimulates binding of mRNA and methionyl-tRNAi to the 40S ribosome. The eIF-3 complex specifically targets and initiates translation of a subset of mRNAs involved in cell proliferation. This is Eukaryotic translation initiation factor 3 subunit M from Culex quinquefasciatus (Southern house mosquito).